Reading from the N-terminus, the 150-residue chain is UPF0735 ACT domain-containing protein DSY2247 (150 aa).

Positions 74-149 (TFSLTLENTA…GVRKIEVIGQ (76 aa)) constitute an ACT domain.

The protein belongs to the UPF0735 family.

The protein is UPF0735 ACT domain-containing protein DSY2247 of Desulfitobacterium hafniense (strain Y51).